Reading from the N-terminus, the 483-residue chain is Proline--tRNA ligase (483 aa).

This sequence belongs to the class-II aminoacyl-tRNA synthetase family. ProS type 3 subfamily. In terms of assembly, homodimer.

The protein resides in the cytoplasm. It catalyses the reaction tRNA(Pro) + L-proline + ATP = L-prolyl-tRNA(Pro) + AMP + diphosphate. Its function is as follows. Catalyzes the attachment of proline to tRNA(Pro) in a two-step reaction: proline is first activated by ATP to form Pro-AMP and then transferred to the acceptor end of tRNA(Pro). In Mycoplasma genitalium (strain ATCC 33530 / DSM 19775 / NCTC 10195 / G37) (Mycoplasmoides genitalium), this protein is Proline--tRNA ligase.